The following is a 276-amino-acid chain: Biotin synthase (276 aa).

One can recognise a Radical SAM core domain in the interval Met1 to Arg226. [4Fe-4S] cluster is bound by residues Cys17, Cys21, and Cys24. [2Fe-2S] cluster-binding residues include Cys61, Cys95, and Cys153.

This sequence belongs to the radical SAM superfamily. Biotin synthase family. As to quaternary structure, homodimer. The cofactor is [4Fe-4S] cluster. It depends on [2Fe-2S] cluster as a cofactor.

The catalysed reaction is (4R,5S)-dethiobiotin + (sulfur carrier)-SH + 2 reduced [2Fe-2S]-[ferredoxin] + 2 S-adenosyl-L-methionine = (sulfur carrier)-H + biotin + 2 5'-deoxyadenosine + 2 L-methionine + 2 oxidized [2Fe-2S]-[ferredoxin]. The protein operates within cofactor biosynthesis; biotin biosynthesis; biotin from 7,8-diaminononanoate: step 2/2. Catalyzes the conversion of dethiobiotin (DTB) to biotin by the insertion of a sulfur atom into dethiobiotin via a radical-based mechanism. The sequence is that of Biotin synthase from Nautilia profundicola (strain ATCC BAA-1463 / DSM 18972 / AmH).